Here is a 161-residue protein sequence, read N- to C-terminus: Small ribosomal subunit protein uS9 (161 aa).

This sequence belongs to the universal ribosomal protein uS9 family.

The protein is Small ribosomal subunit protein uS9 (rpsI) of Rickettsia prowazekii (strain Madrid E).